A 159-amino-acid chain; its full sequence is Large ribosomal subunit protein eL24 (159 aa).

The interval 118 to 159 (ANKAVRAAKAAANKEKKASQPKTQQKTAKNVKTAAPRVGGKR) is disordered. A compositionally biased stretch (polar residues) spans 137–147 (QPKTQQKTAKN).

This sequence belongs to the eukaryotic ribosomal protein eL24 family.

The chain is Large ribosomal subunit protein eL24 from Caenorhabditis elegans.